A 141-amino-acid polypeptide reads, in one-letter code: Organic hydroperoxide resistance protein-like 1 (141 aa).

Residues 1–20 form a disordered region; the sequence is MAVNYETKATNTGGRNGHVQ.

It belongs to the OsmC/Ohr family.

This is Organic hydroperoxide resistance protein-like 1 from Staphylococcus saprophyticus subsp. saprophyticus (strain ATCC 15305 / DSM 20229 / NCIMB 8711 / NCTC 7292 / S-41).